The following is a 351-amino-acid chain: Protein Maqu_2141 (351 aa).

Belongs to the proline racemase family.

Displays neither proline racemase activity nor trans-4-hydroxy-L-proline (t4LHyp) epimerase activity nor t3LHyp dehydratase activity. This Marinobacter nauticus (strain ATCC 700491 / DSM 11845 / VT8) (Marinobacter aquaeolei) protein is Protein Maqu_2141.